Reading from the N-terminus, the 208-residue chain is Redox-sensing transcriptional repressor Rex (208 aa).

A DNA-binding region (H-T-H motif) is located at residues Ser15 to Phe54. Gly89–Gly94 contributes to the NAD(+) binding site.

The protein belongs to the transcriptional regulatory Rex family. As to quaternary structure, homodimer.

The protein resides in the cytoplasm. In terms of biological role, modulates transcription in response to changes in cellular NADH/NAD(+) redox state. This Thermotoga petrophila (strain ATCC BAA-488 / DSM 13995 / JCM 10881 / RKU-1) protein is Redox-sensing transcriptional repressor Rex.